A 463-amino-acid polypeptide reads, in one-letter code: DNA polymerase subunit gamma-2, mitochondrial (463 aa).

The transit peptide at methionine 1–leucine 44 directs the protein to the mitochondrion.

In terms of assembly, heterotrimer composed of a catalytic subunit and a homodimer of accessory subunits.

Its subcellular location is the mitochondrion. Mitochondrial polymerase processivity subunit. It regulates the polymerase and exonuclease activities promoting processive DNA synthesis. Binds to ss-DNA. In Xenopus laevis (African clawed frog), this protein is DNA polymerase subunit gamma-2, mitochondrial (polg2).